Reading from the N-terminus, the 292-residue chain is 4-hydroxy-tetrahydrodipicolinate synthase (292 aa).

Thr45 lines the pyruvate pocket. Residue Tyr133 is the Proton donor/acceptor of the active site. The active-site Schiff-base intermediate with substrate is Lys161. A pyruvate-binding site is contributed by Ile203.

Belongs to the DapA family. In terms of assembly, homotetramer; dimer of dimers.

The protein resides in the cytoplasm. The catalysed reaction is L-aspartate 4-semialdehyde + pyruvate = (2S,4S)-4-hydroxy-2,3,4,5-tetrahydrodipicolinate + H2O + H(+). The protein operates within amino-acid biosynthesis; L-lysine biosynthesis via DAP pathway; (S)-tetrahydrodipicolinate from L-aspartate: step 3/4. Catalyzes the condensation of (S)-aspartate-beta-semialdehyde [(S)-ASA] and pyruvate to 4-hydroxy-tetrahydrodipicolinate (HTPA). The sequence is that of 4-hydroxy-tetrahydrodipicolinate synthase from Acidiphilium cryptum (strain JF-5).